We begin with the raw amino-acid sequence, 89 residues long: Small ribosomal subunit protein uS15 (89 aa).

The protein belongs to the universal ribosomal protein uS15 family. In terms of assembly, part of the 30S ribosomal subunit. Forms a bridge to the 50S subunit in the 70S ribosome, contacting the 23S rRNA.

One of the primary rRNA binding proteins, it binds directly to 16S rRNA where it helps nucleate assembly of the platform of the 30S subunit by binding and bridging several RNA helices of the 16S rRNA. Functionally, forms an intersubunit bridge (bridge B4) with the 23S rRNA of the 50S subunit in the ribosome. This is Small ribosomal subunit protein uS15 from Shewanella piezotolerans (strain WP3 / JCM 13877).